Consider the following 515-residue polypeptide: Serine/threonine-protein phosphatase PP-Z (515 aa).

Positions 1 to 186 (MGQGSSKHAD…SSTDPDDPET (186 aa)) are disordered. A compositionally biased stretch (polar residues) spans 17–30 (PSFSRSDTQGSIKS). Ser18 is subject to Phosphoserine. Residues 40 to 51 (KGKDSNHDRRTS) show a composition bias toward basic and acidic residues. A compositionally biased stretch (pro residues) spans 63–74 (ETPPSLPPPPSP). The span at 91 to 109 (DSGNSSQSPTSPHPSNQPA) shows a compositional bias: polar residues. The segment covering 126-143 (SSSSYAVSPTSPTSPTSS) has biased composition (low complexity). Mn(2+)-binding residues include Asp248, His250, Asp276, and Asn308. Catalysis depends on His309, which acts as the Proton donor. Mn(2+)-binding residues include His357 and His432. 2 positions are modified to phosphoserine: Ser505 and Ser514.

It belongs to the PPP phosphatase family. PP-Z subfamily. The cofactor is Mn(2+).

The protein localises to the cytoplasm. It carries out the reaction O-phospho-L-seryl-[protein] + H2O = L-seryl-[protein] + phosphate. It catalyses the reaction O-phospho-L-threonyl-[protein] + H2O = L-threonyl-[protein] + phosphate. The sequence is that of Serine/threonine-protein phosphatase PP-Z (pzh1) from Schizosaccharomyces pombe (strain 972 / ATCC 24843) (Fission yeast).